The chain runs to 537 residues: Phosphoenolpyruvate carboxykinase (ATP) (537 aa).

Arginine 61, tyrosine 194, and lysine 200 together coordinate substrate. ATP is bound by residues lysine 200, histidine 219, and 235–243; that span reads GLSGTGKTT. 2 residues coordinate Mn(2+): lysine 200 and histidine 219. Aspartate 256 is a Mn(2+) binding site. The ATP site is built by glutamate 284, arginine 322, and threonine 448. Arginine 322 contacts substrate.

It belongs to the phosphoenolpyruvate carboxykinase (ATP) family. Mn(2+) serves as cofactor.

Its subcellular location is the cytoplasm. The catalysed reaction is oxaloacetate + ATP = phosphoenolpyruvate + ADP + CO2. The protein operates within carbohydrate biosynthesis; gluconeogenesis. Its function is as follows. Involved in the gluconeogenesis. Catalyzes the conversion of oxaloacetate (OAA) to phosphoenolpyruvate (PEP) through direct phosphoryl transfer between the nucleoside triphosphate and OAA. This Bradyrhizobium sp. (strain BTAi1 / ATCC BAA-1182) protein is Phosphoenolpyruvate carboxykinase (ATP).